The sequence spans 50 residues: F420-non-reducing hydrogenase vhu subunit U (50 aa).

Residues U27 and C30 each coordinate Ni(2+). U27 is a non-standard amino acid (selenocysteine). Positions 34–50 are cleaved as a propeptide — removed in mature form; sequence IIVKDEKGNKIIEVIKE.

The protein belongs to the [NiFe]/[NiFeSe] hydrogenase large subunit family. The F420-non-reducing hydrogenase vhu is composed of four subunits; VhuA, VhuD, VhuG and VhuU. Ni(2+) serves as cofactor.

This chain is F420-non-reducing hydrogenase vhu subunit U (vhuU), found in Methanocaldococcus jannaschii (strain ATCC 43067 / DSM 2661 / JAL-1 / JCM 10045 / NBRC 100440) (Methanococcus jannaschii).